The primary structure comprises 139 residues: MRVTQGCFSFLPDLSDEQIKLQVGYAMSKGWAVSVEWTDDPHPRNSYWELWGLPLFDVKDPAAVMYELAECRKVNPEGYIKINAFDASIGTESCVMSFIVQRPINEPGFYLERNEVQGRNIQYTISSYAVQARPSGDRY.

It belongs to the RuBisCO small chain family. As to quaternary structure, heterohexadecamer of 8 large and 8 small subunits.

The protein localises to the plastid. Its subcellular location is the chloroplast. Its function is as follows. RuBisCO catalyzes two reactions: the carboxylation of D-ribulose 1,5-bisphosphate, the primary event in carbon dioxide fixation, as well as the oxidative fragmentation of the pentose substrate in the photorespiration process. Both reactions occur simultaneously and in competition at the same active site. Although the small subunit is not catalytic it is essential for maximal activity. In Pylaiella littoralis (Seaweed), this protein is Ribulose bisphosphate carboxylase small subunit.